The following is a 73-amino-acid chain: Translation initiation factor IF-1 (73 aa).

The S1-like domain occupies 1 to 73 (MAKKDGVIEI…TRGRIVYRYK (73 aa)).

Belongs to the IF-1 family. As to quaternary structure, component of the 30S ribosomal translation pre-initiation complex which assembles on the 30S ribosome in the order IF-2 and IF-3, IF-1 and N-formylmethionyl-tRNA(fMet); mRNA recruitment can occur at any time during PIC assembly.

Its subcellular location is the cytoplasm. In terms of biological role, one of the essential components for the initiation of protein synthesis. Stabilizes the binding of IF-2 and IF-3 on the 30S subunit to which N-formylmethionyl-tRNA(fMet) subsequently binds. Helps modulate mRNA selection, yielding the 30S pre-initiation complex (PIC). Upon addition of the 50S ribosomal subunit IF-1, IF-2 and IF-3 are released leaving the mature 70S translation initiation complex. This Clavibacter michiganensis subsp. michiganensis (strain NCPPB 382) protein is Translation initiation factor IF-1.